The sequence spans 432 residues: MGKSVVILGAQWGDEGKGKIVDLLTDRVKYVVRYQGGHNAGHTLIINGEKTVLRLIPSGMLHPNVTCLIGNGVVVSPEALMKEMGELESRGIKVRERLLISEACPLILPYHVAMDHAREAALGKKAIGTTGRGIGPAYEDKVARRGLRIGDLFNKEAFAEKLKNILEYYNFQLVNYYKVEPVDYQKTLDDVMAIADVITGMVADITTILDTARKNGEHILFEGAQGTMLDIDHGTYPYVTSSNTTAGGVATGSGFGPRNLDYVLGIIKAYCTRVGGGPFTTELFDDVGAEIARKGNEFGAVTGRPRRCGWFDAVAIRRAIQLNSISGFCMTKLDVLDGFDEVKICVAYKMPNGEIVEYAPLAAKDWDGVEPIYETLPGWKENTFRITDVNKLPQNCINYIKRIEEVTGVPIDILSTGPDRVETMILRDPFAA.

Residues 13-19 (GDEGKGK) and 41-43 (GHT) contribute to the GTP site. D14 (proton acceptor) is an active-site residue. Mg(2+) is bound by residues D14 and G41. Residues 14–17 (DEGK), 39–42 (NAGH), T130, R144, Q225, T240, and R304 contribute to the IMP site. The Proton donor role is filled by H42. 300 to 306 (AVTGRPR) serves as a coordination point for substrate. GTP-binding positions include R306, 332 to 334 (KLD), and 415 to 417 (STG).

The protein belongs to the adenylosuccinate synthetase family. As to quaternary structure, homodimer. Requires Mg(2+) as cofactor.

The protein resides in the cytoplasm. It catalyses the reaction IMP + L-aspartate + GTP = N(6)-(1,2-dicarboxyethyl)-AMP + GDP + phosphate + 2 H(+). It participates in purine metabolism; AMP biosynthesis via de novo pathway; AMP from IMP: step 1/2. Functionally, plays an important role in the de novo pathway of purine nucleotide biosynthesis. Catalyzes the first committed step in the biosynthesis of AMP from IMP. The chain is Adenylosuccinate synthetase from Haemophilus influenzae (strain PittGG).